The sequence spans 482 residues: MLDVPLLIGGQSCPARDGRTFERRNPVTGELVSRVAAATLEDADAAVAAAQQAFPAWAALAPNERRSRLLKAAEQLQARSGEFIEAAGETGAMANWYGFNVRLAANMLREAASMTTQVNGEVIPSDVPGSFAMALRQPCGVVLGIAPWNAPVILATRAIAMPLACGNTVVLKASELSPAVHRLIGQVLQDAGLGDGVVNVISNAPADAAQIVERLIANPAVRRVNFTGSTHVGRIVGELSARHLKPALLELGGKAPLLVLDDADLEAAVQAAAFGAYFNQGQICMSTERLIVDAKVADAFVAQLAAKVETLRAGDPADPESVLGSLVDASAGTRIKALIDDAVAKGARLVIGGQLEGSILQPTLLDGVDASMRLYREESFGPVAVVLRGEGEEALLQLANDSEFGLSAAIFSRDTGRALALAQRVESGICHINGPTVHDEAQMPFGGVKSSGYGSFGGKASIEHFTQLRWVTLQNGPRHYPI.

Glycine 228–glycine 233 lines the NAD(+) pocket. Active-site residues include glutamate 250 and cysteine 284.

It belongs to the aldehyde dehydrogenase family.

It carries out the reaction vanillin + NAD(+) + H2O = vanillate + NADH + 2 H(+). Catalyzes the NAD-dependent oxidation of vanillin to vanillic acid. This is Vanillin dehydrogenase (vdh) from Pseudomonas fluorescens.